Consider the following 184-residue polypeptide: GTP cyclohydrolase 1 (184 aa).

Zn(2+)-binding residues include Cys75, His78, and Cys146.

Belongs to the GTP cyclohydrolase I family. In terms of assembly, toroid-shaped homodecamer, composed of two pentamers of five dimers.

The enzyme catalyses GTP + H2O = 7,8-dihydroneopterin 3'-triphosphate + formate + H(+). The protein operates within cofactor biosynthesis; 7,8-dihydroneopterin triphosphate biosynthesis; 7,8-dihydroneopterin triphosphate from GTP: step 1/1. In Chromohalobacter salexigens (strain ATCC BAA-138 / DSM 3043 / CIP 106854 / NCIMB 13768 / 1H11), this protein is GTP cyclohydrolase 1.